The primary structure comprises 634 residues: CREB-regulated transcription coactivator 1 (634 aa).

A phosphoserine mark is found at Ser-64 and Ser-113. 4 disordered regions span residues 110-174 (RLGS…GSQD), 191-221 (TTSE…VPGI), 258-331 (LPTP…TLSP), and 357-479 (QAGS…HTST). Thr-149 carries the phosphothreonine modification. Residue Ser-151 is modified to Phosphoserine; by SIK1 and SIK2. The span at 151 to 174 (SDSALHQSTMTPTQPESFSSGSQD) shows a compositional bias: polar residues. Phosphothreonine is present on Thr-161. Residues 194–208 (EADKNLSKQAWDTKK) are compositionally biased toward basic and acidic residues. The Nuclear export signal motif lies at 242–258 (TGGSLPDLTNIHFPSPL). Polar residues-rich tracts occupy residues 271 to 283 (ALSS…NLAA), 296 to 305 (GMSTPGSSPQ), and 314 to 331 (LSLS…TLSP). The segment covering 362–397 (QPPPQPQPPPPPPPASQQPPPPPPPQAPVRLPPGGP) has biased composition (pro residues). The segment covering 446–479 (QYRTSAGSPANQSPTSPVSNQGFSPGSSPQHTST) has biased composition (polar residues).

It belongs to the TORC family. In terms of assembly, binds, as a tetramer, through its N-terminal region, with the bZIP domain of CREB1. 'Arg-314' in the bZIP domain of CREB1 is essential for this interaction. Interaction, via its C-terminal, with TAF4, enhances recruitment of TAF4 to CREB1. Interacts with 14-3-3 proteins, including YWHAE/14-3-3 epsilon. Interacts with calmodulin-dependent catalytic subunit PPP3CA/calcineurin A. (Microbial infection) Interacts with HTLV1 Tax. Phosphorylation/dephosphorylation states of Ser-151 are required for regulating transduction of CREB activity. TORCs are inactive when phosphorylated, and active when dephosphorylated at this site. This primary site of phosphorylation is mediated by SIKs (SIK1 and SIK2), is regulated by cAMP and calcium levels and is dependent on the phosphorylation of SIKs by LKB1. Highly expressed in adult and fetal brain. Located to specific regions such as the prefrontal cortex and cerebellum. Very low expression in other tissues such as heart, spleen, lung, skeletal muscle, salivary gland, ovary and kidney.

It localises to the cytoplasm. The protein resides in the nucleus. Functionally, transcriptional coactivator for CREB1 which activates transcription through both consensus and variant cAMP response element (CRE) sites. Acts as a coactivator, in the SIK/TORC signaling pathway, being active when dephosphorylated and acts independently of CREB1 'Ser-133' phosphorylation. Enhances the interaction of CREB1 with TAF4. Regulates the expression of specific CREB-activated genes such as the steroidogenic gene, StAR. Potent coactivator of PGC1alpha and inducer of mitochondrial biogenesis in muscle cells. In the hippocampus, involved in late-phase long-term potentiation (L-LTP) maintenance at the Schaffer collateral-CA1 synapses. May be required for dendritic growth of developing cortical neurons. In concert with SIK1, regulates the light-induced entrainment of the circadian clock. In response to light stimulus, coactivates the CREB-mediated transcription of PER1 which plays an important role in the photic entrainment of the circadian clock. (Microbial infection) Plays a role of coactivator for TAX activation of the human T-cell leukemia virus type 1 (HTLV-1) long terminal repeats (LTR). The chain is CREB-regulated transcription coactivator 1 from Homo sapiens (Human).